The following is a 273-amino-acid chain: Putative pyruvate, phosphate dikinase regulatory protein (273 aa).

149–156 serves as a coordination point for ADP; it reads GPSRTSKT.

This sequence belongs to the pyruvate, phosphate/water dikinase regulatory protein family. PDRP subfamily.

The catalysed reaction is N(tele)-phospho-L-histidyl/L-threonyl-[pyruvate, phosphate dikinase] + ADP = N(tele)-phospho-L-histidyl/O-phospho-L-threonyl-[pyruvate, phosphate dikinase] + AMP + H(+). It catalyses the reaction N(tele)-phospho-L-histidyl/O-phospho-L-threonyl-[pyruvate, phosphate dikinase] + phosphate + H(+) = N(tele)-phospho-L-histidyl/L-threonyl-[pyruvate, phosphate dikinase] + diphosphate. Bifunctional serine/threonine kinase and phosphorylase involved in the regulation of the pyruvate, phosphate dikinase (PPDK) by catalyzing its phosphorylation/dephosphorylation. In Rickettsia massiliae (strain Mtu5), this protein is Putative pyruvate, phosphate dikinase regulatory protein.